The sequence spans 67 residues: MKTNELRNLTTAEIEQKTKSLKEELFNLRFQLATGQLDNPTRIREVRKNIARAKTVLRERELGINNG.

The protein belongs to the universal ribosomal protein uL29 family.

This Halalkalibacterium halodurans (strain ATCC BAA-125 / DSM 18197 / FERM 7344 / JCM 9153 / C-125) (Bacillus halodurans) protein is Large ribosomal subunit protein uL29 (rpmC).